We begin with the raw amino-acid sequence, 86 residues long: MADERTGDSVKTRYDIALMNLNDIKIAVFRDSLSTYVEQKTGLTIQFNWPKSRCLVISTLCKIPFPTKSAAELQEMCKYQCFVSVL.

The polypeptide is Protein U17 (U17/U16) (Homo sapiens (Human)).